The primary structure comprises 407 residues: Phosphopentomutase (407 aa).

6 residues coordinate Mn(2+): D10, D306, H311, D347, H348, and H359.

The protein belongs to the phosphopentomutase family. The cofactor is Mn(2+).

It localises to the cytoplasm. It carries out the reaction 2-deoxy-alpha-D-ribose 1-phosphate = 2-deoxy-D-ribose 5-phosphate. The catalysed reaction is alpha-D-ribose 1-phosphate = D-ribose 5-phosphate. Its pathway is carbohydrate degradation; 2-deoxy-D-ribose 1-phosphate degradation; D-glyceraldehyde 3-phosphate and acetaldehyde from 2-deoxy-alpha-D-ribose 1-phosphate: step 1/2. Its function is as follows. Isomerase that catalyzes the conversion of deoxy-ribose 1-phosphate (dRib-1-P) and ribose 1-phosphate (Rib-1-P) to deoxy-ribose 5-phosphate (dRib-5-P) and ribose 5-phosphate (Rib-5-P), respectively. The sequence is that of Phosphopentomutase from Escherichia coli O127:H6 (strain E2348/69 / EPEC).